A 580-amino-acid chain; its full sequence is DBIRD complex subunit ZNF326 (580 aa).

Residues 1–124 form a mediates transcriptional activation region; it reads MDFEDDYVHS…YRNSLDSFGG (124 aa). Phosphoserine is present on residues serine 48, serine 56, serine 63, serine 69, serine 81, serine 82, serine 91, serine 106, serine 114, serine 118, serine 121, and serine 137. A Glycyl lysine isopeptide (Lys-Gly) (interchain with G-Cter in SUMO2) cross-link involves residue lysine 140. The segment at 156-196 is disordered; the sequence is SYSSFSSPHMKPAPVGSRGRGTPAYPESTFGSRSYDAFGGP. Arginine 173 carries the post-translational modification Omega-N-methylarginine. A Phosphoserine modification is found at serine 212. Arginine 235 carries the post-translational modification Omega-N-methylarginine. A Bipartite nuclear localization signal motif is present at residues 238–260; the sequence is KRKMMQIFIKPGGAFIKKPKLAK. Lysine 240 is covalently cross-linked (Glycyl lysine isopeptide (Lys-Gly) (interchain with G-Cter in SUMO2)). Position 247 is an N6-acetyllysine; alternate (lysine 247). Lysine 247 participates in a covalent cross-link: Glycyl lysine isopeptide (Lys-Gly) (interchain with G-Cter in SUMO2); alternate. Residues lysine 254 and lysine 264 each participate in a glycyl lysine isopeptide (Lys-Gly) (interchain with G-Cter in SUMO2) cross-link. Residues 256-302 are disordered; sequence PKLAKPMDKMNLSKSPTKTDPKNEEEEKRRIEARREKQRRRREKNSE. At serine 270 the chain carries Phosphoserine. Basic and acidic residues predominate over residues 272 to 290; that stretch reads TKTDPKNEEEEKRRIEARR. Residues 314–336 form a C2H2 AKAP95-type 1 zinc finger; sequence CSFCKFRTFEEKDIELHLESSSH. Residue lysine 401 forms a Glycyl lysine isopeptide (Lys-Gly) (interchain with G-Cter in SUMO2) linkage. Residues 407–430 form a C2H2 AKAP95-type 2 zinc finger; that stretch reads CSACSVYIPALHSSVQLHLKSPDH. Residues lysine 459 and lysine 467 each participate in a glycyl lysine isopeptide (Lys-Gly) (interchain with G-Cter in SUMO2) cross-link. Positions 470–580 are disordered; that stretch reads NPFEIQDHPQ…ATEQCEHRQM (111 aa). Residues 483-529 are compositionally biased toward acidic residues; sequence IEGDEEDEEKIDEPIEEEEEEEEEEEEEGEEAGSVEEEGDVEGEEGT. Residues 530–539 are compositionally biased toward low complexity; the sequence is AEAAAAGEAD. The span at 540-562 shows a compositional bias: acidic residues; it reads AVGEAEGAGEAEEAEEEEEEEGT.

The protein belongs to the AKAP95 family. As to quaternary structure, component of the DBIRD complex. Interacts with CCAR2; the interaction is direct. Ubiquitously expressed in adult tissues. Highly expressed in neuronal tissues such as brain and neural tube.

It is found in the nucleus matrix. Core component of the DBIRD complex, a multiprotein complex that acts at the interface between core mRNP particles and RNA polymerase II (RNAPII) and integrates transcript elongation with the regulation of alternative splicing: the DBIRD complex affects local transcript elongation rates and alternative splicing of a large set of exons embedded in (A + T)-rich DNA regions. May also play a role in neuronal differentiation. Able to bind DNA and activate expression in vitro. In Mus musculus (Mouse), this protein is DBIRD complex subunit ZNF326 (Znf326).